The primary structure comprises 753 residues: MERARPEPQPQQRPLRPAPPLLPVEGTTFWAAAVEPPPSPPTLSAAASATLASSCGEAVASGLPPAVRRLLQVKPEQVLLLPQPQARDEEAAASPAQARLLQFRPDLRLLPPPSASEGAPSRPELHPVQPRALHFKAKKQELGPGLDPSVGPRGGVETGPRASRVVKLEGPGPALAYFRGNEKGKLEAEEVMRDAMKGGDGKSPAAIREGVIKTEEPERLLEDCRLDAEPASNGLVHGSAEVILAPTSGAFGPHQQDLRIPLTLHTVPPGARIQFQGAPPSELIRLTKVPLTPVPIKMQSLLEPSVKIETKDVPLTVLPSDAGIPDTPFSKDRNGHVKRPMNAFMVWARIHRPALAKANPAANNAEISVQLGLEWNKLSEEQKKPYYDEAQKIKEKHREEFPGWVYQPRPGKRKRFPLSVSNVFSGTTQNIISTNPTTVYPYRSPTYSVVIPSLQNPITHPVGETSPAIQLPTPAVQRPSPVTLFQPSVSSAAQVAVQDPSLPLYPALPPQRFAGPSQTDTHQLHSEGTHTVKQPTPVSLESTNRISNSASTAHARFATSTIQPPKEYSSVSPCPRSAPIPQASPIPHPHVYQPPPLGHPATLFGTPPRFSFHHPYFLPGPHYFPSSTCPYSRPPFGYGNFPSSMPECLGYYEDRYQKHEAIFSALNRDYSFRDYSSERTHSENSRSCENMNGTSFYNSHSHSGEEYLNPVPQLDIGALENVFTAPTSTPSSIQQVNVTDSDEEEEEKVLRDL.

Disordered regions lie at residues 1 to 45 and 140 to 161; these read MERA…TLSA and QELG…TGPR. The segment covering 7-22 has biased composition (pro residues); the sequence is EPQPQQRPLRPAPPLL. The HMG box DNA-binding region spans 337–405; the sequence is VKRPMNAFMV…KHREEFPGWV (69 aa). Disordered stretches follow at residues 514–540 and 726–753; these read AGPS…PVSL and PTST…LRDL. 2 stretches are compositionally biased toward polar residues: residues 531–540 and 726–739; these read TVKQPTPVSL and PTST…VNVT.

As to quaternary structure, interacts with CTNNB1, competitively inhibiting CTNNB1-TCF7L2/TCF4 interaction.

Its subcellular location is the nucleus. It is found in the cytoplasm. Functionally, acts both as a transcriptional activator and a repressor. Binds to the DNA sequence 5'-ACAAT-3' and shows a preference for guanine residues surrounding this core motif. Binds to its own promoter and activates its own transcription. Required to activate the expression of postmeiotic genes involved in spermiogenesis. Binds to the promoter region of CTNNB1 and represses its transcription which leads to inhibition of Wnt signaling. Also inhibits Wnt signaling by binding to the CTNNB1 protein, preventing interaction of CTNNB1 with TCF7L2/TCF4. The polypeptide is Transcription factor SOX-30 (SOX30) (Macaca fascicularis (Crab-eating macaque)).